Here is a 309-residue protein sequence, read N- to C-terminus: MRIYVLGAGSIGSLFGALLARAGNDVTLIGRREQVDAINKNGLHVFGAEEFTVKPKATIYAPEEPPDLLILAVKSYSTKTALECARQCIGRNTWVLSIQNGLGNEELALKYTPNVMGGVTTNGAMLVEWGKVLWAGKGITVIGRYPTGRDDFVDEVASVFNEAGIDTSVTENAIGWKWAKAIVNSVINGLGTVLEVKNGHLKDDPHLEGISVDIAREGCMVAQQLGIEFEIHPLELLWDTIERTRENYNSTLQDIWRGRETEVDYIHGKIVEYARSVGMEAPRNELLWVLVKAKERINRGKTRNISEGC.

NADP(+)-binding positions include 7 to 12, Arg-31, and Lys-74; that span reads GAGSIG. CoA is bound by residues 8 to 10, Arg-31, Lys-74, and Cys-84; that span reads AGS. Asn-100 and Ala-124 together coordinate NADP(+). Lys-180 functions as the Proton donor in the catalytic mechanism. Residues Lys-180, Asn-184, Asn-188, Asn-198, and 247–250 each bind substrate; that span reads NYNS. Arg-257 provides a ligand contact to CoA. Position 262 (Glu-262) interacts with NADP(+).

It belongs to the ketopantoate reductase family. As to quaternary structure, homodimer.

The protein localises to the cytoplasm. It catalyses the reaction (R)-pantoate + NAD(+) = 2-dehydropantoate + NADH + H(+). The enzyme catalyses (R)-pantoate + NADP(+) = 2-dehydropantoate + NADPH + H(+). It participates in cofactor biosynthesis; coenzyme A biosynthesis. Regulated by feedback inhibition by coenzyme A (CoA). CoA acts by competing with NAD(P)H. A disulfide bond is formed between CoA and Cys-84, which indicates an irreversible inhibition upon binding of CoA. In terms of biological role, catalyzes the NAD(P)H-dependent reduction of ketopantoate into pantoic acid. Prefers NADH rather than NADPH as the electron donor. The polypeptide is 2-dehydropantoate 2-reductase (Thermococcus kodakarensis (strain ATCC BAA-918 / JCM 12380 / KOD1) (Pyrococcus kodakaraensis (strain KOD1))).